Consider the following 1818-residue polypeptide: Integrin beta-4 (1818 aa).

Residues 1–28 form the signal peptide; it reads MAGPCCSPWVKLLLLAAMLSASLPGDLA. Topologically, residues 29–712 are extracellular; sequence NRCKKAQVKS…HKKKDCPPGS (684 aa). Residues 30-74 form the PSI domain; the sequence is RCKKAQVKSCTECIRVDKSCAYCTDELFKERRCNTQAELLAAGCR. 8 disulfide bridges follow: C31-C49, C39-C457, C42-C62, C52-C73, C246-C289, C459-C478, C470-C481, and C483-C492. Residues 132–310 form the VWFA domain; that stretch reads DLYILMDFSN…KTQDYPSVPT (179 aa). Residues S140 and S142 each contribute to the Mg(2+) site. S142, D145, D146, and D177 together coordinate Ca(2+). Residues 195–200 form an involved in NRG1- and IGF1-binding region; the sequence is WPNSDP. N229, D231, P233, and E234 together coordinate Ca(2+). E234 is a binding site for Mg(2+). N-linked (GlcNAc...) asparagine glycosylation occurs at N328. Residue E351 participates in Ca(2+) binding. 4 consecutive I-EGF domains span residues 459–493, 494–539, 540–576, and 577–617; these read CELQ…KTCN, CSTG…HFCE, YDNF…RSCD, and CPLS…TTCE. Residues 473–475 carry the Cell attachment site motif; that stretch reads RGD. N-linked (GlcNAc...) asparagine glycosylation occurs at N493. 11 disulfide bridges follow: C494/C522, C505/C520, C514/C525, C527/C538, C545/C559, C553/C564, C566/C575, C577/C600, C584/C598, C592/C603, and C605/C616. N-linked (GlcNAc...) asparagine glycosylation occurs at N581. N-linked (GlcNAc...) asparagine glycosylation is present at N619. Disulfide bonds link C628-C673, C634-C653, C637-C650, and C682-C708. A glycan (N-linked (GlcNAc...) asparagine) is linked at N697. A helical membrane pass occupies residues 713–733; it reads FWWLIPLLIFLLLLLALLLLL. The segment at 734 to 751 is palmitoylated on several cysteines; the sequence is CWKYCACCKACLGLLPCC. Topologically, residues 734-1818 are cytoplasmic; it reads CWKYCACCKA…THMDQQFFQT (1085 aa). At S773 the chain carries Phosphoserine. Residues 981 to 1086 form the Calx-beta domain; sequence VNITIIKEQA…QVRRFQVQLS (106 aa). A Cell attachment site motif is present at residues 1005-1007; it reads RGD. Residues S1071 and S1121 each carry the phosphoserine modification. The disordered stretch occupies residues 1115 to 1137; sequence INQTLSSPPPPHGDLGAPQNPNA. 2 consecutive Fibronectin type-III domains span residues 1131-1220 and 1224-1323; these read APQN…THQE and EPGR…TQPK. The tract at residues 1402 to 1433 is disordered; that stretch reads LSASSGRSDEDGSVAGGVEGEGSGWIRGATPR. The segment covering 1415 to 1426 has biased composition (gly residues); the sequence is VAGGVEGEGSGW. A phosphoserine mark is found at S1451, S1454, and S1470. T1483 bears the Phosphothreonine mark. A Phosphoserine modification is found at S1490. T1526 is subject to Phosphothreonine. 2 consecutive Fibronectin type-III domains span residues 1526–1621 and 1639–1735; these read TPTR…VHPQ and APGP…SQVG. S1787 is modified (phosphoserine).

It belongs to the integrin beta chain family. As to quaternary structure, heterodimer of an alpha and a beta subunit. Beta-4 associates with alpha-6. Interacts (via cytoplasmic region) with COL17A1 (via cytoplasmic region). Interacts (via cytoplasmic region) with DST isoform 3 (via N-terminus). Interacts (via cytoplasmic domain) with DST (via N-terminus). Interacts with RAC1. ITGA6:ITGB4 is found in a ternary complex with NRG1 and ERBB3. ITGA6:ITGB4 is found in a ternary complex with IGF1 and IGF1R. ITGA6:ITGB4 interacts with IGF2. Interacts with TMEM268; this interaction prevents ITGB4 degradation. Palmitoylated by DHHC3 at several cysteines of the membrane-proximal region, enhancing stability and cell surface expression. Palmitoylation also promotes secondary association with tertaspanins.

It localises to the cell membrane. The protein resides in the cell junction. Its subcellular location is the hemidesmosome. Its function is as follows. Integrin alpha-6/beta-4 is a receptor for laminin. It plays a critical structural role in the hemidesmosome of epithelial cells. Is required for the regulation of keratinocyte polarity and motility. ITGA6:ITGB4 binds to NRG1 (via EGF domain) and this binding is essential for NRG1-ERBB signaling. ITGA6:ITGB4 binds to IGF1 and this binding is essential for IGF1 signaling. ITGA6:ITGB4 binds to IGF2 and this binding is essential for IGF2 signaling. In Mus musculus (Mouse), this protein is Integrin beta-4 (Itgb4).